A 653-amino-acid polypeptide reads, in one-letter code: Laccase ustL (653 aa).

The N-terminal stretch at 1–20 (MTSLTGLALLLCVLASQSWA) is a signal peptide. 2 Plastocyanin-like domains span residues 31–143 (WEKG…RPKR) and 173–362 (VLSD…ATQV). Asparagine 74, asparagine 220, asparagine 235, asparagine 255, asparagine 277, asparagine 405, asparagine 463, and asparagine 479 each carry an N-linked (GlcNAc...) asparagine glycan. The 132-residue stretch at 463 to 594 (NQTVGTEDEK…GGMSIALLDG (132 aa)) folds into the Plastocyanin-like 3 domain. Histidine 501, histidine 504, histidine 506, histidine 576, cysteine 577, histidine 578, and histidine 582 together coordinate Cu cation. Asparagine 623 is a glycosylation site (N-linked (GlcNAc...) asparagine).

It belongs to the multicopper oxidase family.

It carries out the reaction 4 norrubrofusarin + O2 = 2 ustilaginoidin A + 2 H2O. Its pathway is secondary metabolite biosynthesis. In terms of biological role, laccase; part of the gene cluster that mediates the biosynthesis of ustilaginoidins, dimeric gamma-naphthopyrones isolated from different fungal species. The first step in the biosynthesis of ustilaginoidins is the production of gamma-naphthopyrone precursor YWA1 by the non-reducing polyketide synthase ustP, via condensation of one acetyl-CoA starter unit with 6 malonyl-CoA units. YWA1 is then probably substrate of the ustZ to yield norrubrofusarin via a dehydration reaction. A key enzyme in the biosynthetic pathway is the laccase ustL, which catalyzes the oxidative dimerization of norrubrofusarin to ustilaginoidin A. It can produce the M- and P-atropisomers in varying amounts, depending on the reaction conditions. For the biosynthesis of 3-methylustilaginoid in derivatives such as chaetochromin A, a methylated derivative of YWA1 is required. The C-methylation is considered to be catalyzed by ustM, the phosphopantetheine attachment site of which indicates that it acts on the growing polyketide chain before release of the product. For the biosynthesis of chaetochromin A, it is assumed that saturation of the D2 double bond takes place before dimerization, and is probably catalyzed by an external reductase because no candidate gene was identified within the cluster. This chain is Laccase ustL, found in Ustilaginoidea virens (Rice false smut fungus).